We begin with the raw amino-acid sequence, 517 residues long: GMP synthase [glutamine-hydrolyzing] (517 aa).

The Glutamine amidotransferase type-1 domain maps to 9 to 199 (RILILDFGSQ…VLNVCGCEGL (191 aa)). C86 (nucleophile) is an active-site residue. Active-site residues include H173 and E175. One can recognise a GMPS ATP-PPase domain in the interval 200–392 (WTSASIIEDA…LGLPYNMLYR (193 aa)). 227–233 (SGGVDSS) provides a ligand contact to ATP.

As to quaternary structure, homodimer.

The enzyme catalyses XMP + L-glutamine + ATP + H2O = GMP + L-glutamate + AMP + diphosphate + 2 H(+). It participates in purine metabolism; GMP biosynthesis; GMP from XMP (L-Gln route): step 1/1. Functionally, catalyzes the synthesis of GMP from XMP. This Aliivibrio fischeri (strain MJ11) (Vibrio fischeri) protein is GMP synthase [glutamine-hydrolyzing].